The following is a 48-amino-acid chain: Protein TUNAR (48 aa).

The tract at residues 1 to 20 (MVITSENDEDRGGQEKESKE) is disordered. The segment covering 10–20 (DRGGQEKESKE) has biased composition (basic and acidic residues). The helical transmembrane segment at 24 to 44 (LAMLGIIGTILNLIVIIFVYI) threads the bilayer.

Interacts with ATPase ATP2A2/SERCA2. Interacts with ATPase ATP2A3/SERCA3; the interaction occurs at low levels in low glucose conditions and is increased by high glucose levels. In terms of tissue distribution, highly expressed in pancreatic islets where it is enriched in the insulin-producing beta cells.

It localises to the endoplasmic reticulum membrane. Its subcellular location is the extracellular vesicle membrane. Functionally, in neurons, plays a role in the regulation of intracellular Ca(2+), possibly by acting as an activator of ATP2A2/SERCA2, thus increasing the efficiency with which Ca(2+) is removed from the cytoplasm. Inhibits differentiation of embryonic stem cells into neurons and inhibits neurite outgrowth, likely as a result of its role in intracellular Ca(2+) regulation. In pancreatic beta cells, lowers Ca(2+) levels in the endoplasmic reticulum and enhances glucose-stimulated insulin secretion. In Homo sapiens (Human), this protein is Protein TUNAR.